Here is a 204-residue protein sequence, read N- to C-terminus: Hydrophilin YNL190W (204 aa).

Residues 1–20 (MKFSSVTAITLATVATVATA) form the signal peptide. The span at 35–46 (SDGSLTTTTSTH) shows a compositional bias: low complexity. A disordered region spans residues 35 to 179 (SDGSLTTTTS…ARKNNAAPGP (145 aa)). Residues 47–59 (TTHKYGKFNKTSK) show a composition bias toward basic residues. N-linked (GlcNAc...) asparagine glycans are attached at residues asparagine 55, asparagine 64, asparagine 75, asparagine 84, asparagine 95, asparagine 104, asparagine 115, asparagine 124, asparagine 135, asparagine 144, and asparagine 155. A compositionally biased stretch (basic residues) spans 67–79 (GTHKYGKFNKTSK). Positions 87-99 (GTHKYGKFNKTSK) are enriched in basic residues. Over residues 107–119 (GTHKYGKFNKTSK) the composition is skewed to basic residues. The segment covering 127–139 (GTHKYGKFNKTSK) has biased composition (basic residues). Residues 147 to 156 (GTHKYGKFNK) are compositionally biased toward basic residues. Asparagine 174 carries the GPI-anchor amidated asparagine lipid modification. A propeptide spans 175–204 (AAPGPSNFNSIKLFGVTAGSAAVAGALLLL) (removed in mature form).

This sequence belongs to the PGA14 family. Post-translationally, the GPI-anchor is attached to the protein in the endoplasmic reticulum and serves to target the protein to the cell surface. There, the glucosamine-inositol phospholipid moiety is cleaved off and the GPI-modified mannoprotein is covalently attached via its lipidless GPI glycan remnant to the 1,6-beta-glucan of the outer cell wall layer.

Its subcellular location is the secreted. The protein localises to the cell wall. It localises to the membrane. Functionally, hydrophilin which is essential to overcome the simple stress of the desiccation-rehydration process. The protein is Hydrophilin YNL190W of Saccharomyces cerevisiae (strain ATCC 204508 / S288c) (Baker's yeast).